A 38-amino-acid polypeptide reads, in one-letter code: Phospholipase A2 1 (38 aa).

Residues Tyr28, Gly30, and Gly32 each coordinate Ca(2+).

Belongs to the phospholipase A2 family. Group I subfamily. Ca(2+) is required as a cofactor. Expressed by the venom gland.

Its subcellular location is the secreted. It carries out the reaction a 1,2-diacyl-sn-glycero-3-phosphocholine + H2O = a 1-acyl-sn-glycero-3-phosphocholine + a fatty acid + H(+). Snake venom phospholipase A2 (PLA2) that inhibits neuromuscular transmission by blocking acetylcholine release from the nerve termini. PLA2 catalyzes the calcium-dependent hydrolysis of the 2-acyl groups in 3-sn-phosphoglycerides. This Calliophis bivirgatus (Blue Malaysian coral snake) protein is Phospholipase A2 1.